Consider the following 500-residue polypeptide: Plexin domain-containing protein 1 (500 aa).

Residues 1 to 18 (MRGELWLLVLVLREAARA) form the signal peptide. The Extracellular segment spans residues 19-426 (LSPQPGAGHD…TKGTPVHLGT (408 aa)). 2 disordered regions span residues 20–39 (SPQPGAGHDEGPGSGWAAKG) and 46–78 (RRARESPGHVSEPDRTQLSQDLGGGTLAMDTLP). Ser-33 carries an O-linked (Xyl...) (chondroitin sulfate) serine glycan. Positions 47 to 60 (RARESPGHVSEPDR) are enriched in basic and acidic residues. N-linked (GlcNAc...) asparagine glycans are attached at residues Asn-80 and Asn-197. Positions 359 to 379 (FQDEDHDSASPDTSFSPYDGD) are disordered. The span at 368 to 379 (SPDTSFSPYDGD) shows a compositional bias: polar residues. A helical membrane pass occupies residues 427-447 (IVGIVLAVLLVAAIILAGIYI). Residues 448–500 (NGHPTSNAALFFIERRPHHWPAMKFRSHPDHSTYAEVEPSGHEKEGFMEAEQC) are Cytoplasmic-facing. Residues 479–494 (STYAEVEPSGHEKEGF) show a composition bias toward basic and acidic residues. The tract at residues 479–500 (STYAEVEPSGHEKEGFMEAEQC) is disordered.

It belongs to the plexin family. In terms of assembly, interacts with NID1. May interact with CTTN. In terms of processing, N-glycosylated. As to expression, detected in urine (at protein level). Detected in endothelial cells from colorectal cancer, and in endothelial cells from primary cancers of the lung, liver, pancreas, breast and brain. Not detectable in endothelial cells from normal tissue. Expressed in fibrovascular membrane with increased expression in individuals with proliferative diabetic retinopathy.

The protein resides in the secreted. Its subcellular location is the cell membrane. It is found in the cell junction. It localises to the tight junction. The protein localises to the cytoplasm. Plays a critical role in endothelial cell capillary morphogenesis. The chain is Plexin domain-containing protein 1 (PLXDC1) from Homo sapiens (Human).